Reading from the N-terminus, the 507-residue chain is Maturase K (507 aa).

Belongs to the intron maturase 2 family. MatK subfamily.

Its subcellular location is the plastid. It localises to the chloroplast. Its function is as follows. Usually encoded in the trnK tRNA gene intron. Probably assists in splicing its own and other chloroplast group II introns. This is Maturase K from Cupaniopsis anacardioides (Carrotwood).